A 778-amino-acid chain; its full sequence is Preaspterpenacid I synthase sttA (778 aa).

Positions 4-359 (ISDVMKHCVP…RYHRTDLATT (356 aa)) are sesterterpenoid synthase. Residue aspartate 105 participates in Mg(2+) binding. Aspartate 105 contacts substrate. Residues 211–214 (RVNE) form a substrate region. Residue asparagine 255 participates in substrate binding. Substrate regions lie at residues 259-263 (SFPKE) and 350-351 (RY). Residues 360-774 (AEDRATLIGK…RMMLLGMGPK (415 aa)) form a geranylfarneyl diphosphate synthase region. The segment at 423–445 (AFKKSNPRNGKQNGTEGSKGTFT) is disordered. Polar residues predominate over residues 429–445 (PRNGKQNGTEGSKGTFT). Residues lysine 493, arginine 496, and histidine 525 each coordinate isopentenyl diphosphate. Mg(2+) is bound by residues aspartate 532 and aspartate 536. Arginine 541 serves as a coordination point for dimethylallyl diphosphate. Arginine 542 is a binding site for isopentenyl diphosphate. The dimethylallyl diphosphate site is built by lysine 619, threonine 620, glutamine 657, asparagine 664, and lysine 674.

In the N-terminal section; belongs to the terpene synthase family. The protein in the C-terminal section; belongs to the FPP/GGPP synthase family.

The enzyme catalyses 4 isopentenyl diphosphate + dimethylallyl diphosphate = (2E,6E,10E,14E)-geranylfarnesyl diphosphate + 4 diphosphate. The catalysed reaction is (2E,6E,10E,14E)-geranylfarnesyl diphosphate + H2O = preaspterpenacid acid I + diphosphate. The protein operates within secondary metabolite biosynthesis; terpenoid biosynthesis. Its function is as follows. Sesterterpenoid synthase; part of the gene cluster that mediates the biosynthesis of aspterpenacids. Performs both prenyl transferase and terpene cyclase activity, converting isopentenyl diphosphate and dimethylallyl diphosphate into geranylfarnesyl diphosphate (GFPP) and then converting GFPP into preaspterpenacid I. C22-oxidative modification of preaspterpenacid I by the cytochrome P450 monooxygenase sttB then leads to preaspterpenacid II. It has still to be determined how preaspterpenacid II is further modified to produce aspterpenacids. The chain is Preaspterpenacid I synthase sttA from Aspergillus terreus.